The following is a 121-amino-acid chain: Ragulator complex protein LAMTOR4 homolog (121 aa).

Residues 91-121 form a disordered region; the sequence is TQNGATTSSSSSTSYNDAAEGNNISSSTVLA. Positions 112-121 are enriched in polar residues; that stretch reads NNISSSTVLA.

The protein belongs to the LAMTOR4 family. In terms of assembly, part of the Ragulator complex.

It is found in the lysosome. In terms of biological role, regulator of the TOR pathway, a signaling cascade that promotes cell growth in response to growth factors, energy levels, and amino acids. As part of the Ragulator complex, may activate the TOR signaling cascade in response to amino acids. In Drosophila pseudoobscura pseudoobscura (Fruit fly), this protein is Ragulator complex protein LAMTOR4 homolog.